We begin with the raw amino-acid sequence, 293 residues long: uncharacterized protein (293 aa).

The segment at 1–22 (MTFNEGVQIDTSTTSTSGSGGG) is disordered. The chain crosses the membrane as a helical span at residues 25–45 (LAIGGGLGGLLVVVVAMLLGV). The interval 243-265 (GDDRIQQQTTGRTNPETWTHGSA) is disordered. Residues 248–265 (QQQTTGRTNPETWTHGSA) show a composition bias toward polar residues.

The protein localises to the membrane. This is an uncharacterized protein from Mycobacterium tuberculosis (strain CDC 1551 / Oshkosh).